A 474-amino-acid chain; its full sequence is Glutamate--tRNA ligase (474 aa).

Positions 11-21 match the 'HIGH' region motif; sequence PSPTGFLHIGG. Positions 240-244 match the 'KMSKS' region motif; the sequence is KLSKR. Residue Lys-243 coordinates ATP.

It belongs to the class-I aminoacyl-tRNA synthetase family. Glutamate--tRNA ligase type 1 subfamily. As to quaternary structure, monomer.

It localises to the cytoplasm. It catalyses the reaction tRNA(Glu) + L-glutamate + ATP = L-glutamyl-tRNA(Glu) + AMP + diphosphate. Functionally, catalyzes the attachment of glutamate to tRNA(Glu) in a two-step reaction: glutamate is first activated by ATP to form Glu-AMP and then transferred to the acceptor end of tRNA(Glu). This Bradyrhizobium sp. (strain BTAi1 / ATCC BAA-1182) protein is Glutamate--tRNA ligase.